The chain runs to 154 residues: Large ribosomal subunit protein bL17 (154 aa).

The tract at residues 125 to 154 is disordered; the sequence is AASQKSSKQDRAKRVQGSKKNVDAVAESAE.

Belongs to the bacterial ribosomal protein bL17 family. As to quaternary structure, part of the 50S ribosomal subunit. Contacts protein L32.

The sequence is that of Large ribosomal subunit protein bL17 from Chlorobium chlorochromatii (strain CaD3).